A 215-amino-acid polypeptide reads, in one-letter code: UPF0323 lipoprotein HP_0232 (215 aa).

The N-terminal stretch at 1-27 (MKKPYRKISDYAIVGGLSALVMVSIVG) is a signal peptide. Cys28 carries N-palmitoyl cysteine lipidation. Cys28 carries S-diacylglycerol cysteine lipidation. A compositionally biased stretch (polar residues) spans 158-169 (QRTYKSPQAYQR). A disordered region spans residues 158–215 (QRTYKSPQAYQRSQNSFSKSAPSASSMGGASKGQSGFFGSSRPTSSPAVSSGTRGFNS). Residues 170-208 (SQNSFSKSAPSASSMGGASKGQSGFFGSSRPTSSPAVSS) are compositionally biased toward low complexity.

This sequence belongs to the UPF0323 family.

The protein localises to the cell membrane. The protein is UPF0323 lipoprotein HP_0232 of Helicobacter pylori (strain ATCC 700392 / 26695) (Campylobacter pylori).